A 513-amino-acid chain; its full sequence is tRNA A64-2'-O-ribosylphosphate transferase (513 aa).

Its function is as follows. tRNA backbone modifying enzyme that mediates initiator/ elongator tRNA discrimination. This enzyme modifies exclusively the initiator tRNA in position 64 using 5'-phosphoribosyl-1'-pyrophosphate as the modification donor. Recognize the stem-loop IV region that is unique in eukaryotic cytoplasmic initiator tRNAs. The sequence is that of tRNA A64-2'-O-ribosylphosphate transferase (RIT1) from Saccharomyces cerevisiae (strain ATCC 204508 / S288c) (Baker's yeast).